The following is a 394-amino-acid chain: Flap endonuclease 1 (394 aa).

The interval 1–104 (MGIKQLFSII…GELAKRFQRK (104 aa)) is N-domain. Asp-34 is a binding site for Mg(2+). Residues Arg-47 and Arg-70 each contribute to the DNA site. Residues Asp-86, Glu-158, Glu-160, Asp-179, and Asp-181 each contribute to the Mg(2+) site. An I-domain region spans residues 122–253 (DVEKFSRRTV…STALKLIREH (132 aa)). Glu-158 lines the DNA pocket. DNA contacts are provided by Gly-231 and Asp-233. A Mg(2+)-binding site is contributed by Asp-233. The interval 341–349 (QQARIEGFF) is interaction with PCNA. Basic and acidic residues predominate over residues 356 to 383 (EEEKKAHKRKLEEQAEQKRKKVKEEKKE). Positions 356-394 (EEEKKAHKRKLEEQAEQKRKKVKEEKKEKAKLKAKPRGA) are disordered. The segment covering 384–394 (KAKLKAKPRGA) has biased composition (basic residues).

This sequence belongs to the XPG/RAD2 endonuclease family. FEN1 subfamily. Interacts with PCNA. Three molecules of FEN1 bind to one PCNA trimer with each molecule binding to one PCNA monomer. PCNA stimulates the nuclease activity without altering cleavage specificity. Requires Mg(2+) as cofactor. Phosphorylated. Phosphorylation upon DNA damage induces relocalization to the nuclear plasma.

It is found in the nucleus. The protein resides in the nucleolus. The protein localises to the nucleoplasm. Its subcellular location is the mitochondrion. Functionally, structure-specific nuclease with 5'-flap endonuclease and 5'-3' exonuclease activities involved in DNA replication and repair. During DNA replication, cleaves the 5'-overhanging flap structure that is generated by displacement synthesis when DNA polymerase encounters the 5'-end of a downstream Okazaki fragment. It enters the flap from the 5'-end and then tracks to cleave the flap base, leaving a nick for ligation. Also involved in the long patch base excision repair (LP-BER) pathway, by cleaving within the apurinic/apyrimidinic (AP) site-terminated flap. Acts as a genome stabilization factor that prevents flaps from equilibrating into structures that lead to duplications and deletions. Also possesses 5'-3' exonuclease activity on nicked or gapped double-stranded DNA, and exhibits RNase H activity. Also involved in replication and repair of rDNA and in repairing mitochondrial DNA. The protein is Flap endonuclease 1 of Sordaria macrospora (strain ATCC MYA-333 / DSM 997 / K(L3346) / K-hell).